Reading from the N-terminus, the 359-residue chain is Phosphoserine aminotransferase (359 aa).

R41 serves as a coordination point for L-glutamate. Residues 75–76 (AS), W99, T147, D166, and Q189 each bind pyridoxal 5'-phosphate. K190 is modified (N6-(pyridoxal phosphate)lysine). 231 to 232 (NT) contributes to the pyridoxal 5'-phosphate binding site.

It belongs to the class-V pyridoxal-phosphate-dependent aminotransferase family. SerC subfamily. As to quaternary structure, homodimer. Requires pyridoxal 5'-phosphate as cofactor.

It localises to the cytoplasm. It carries out the reaction O-phospho-L-serine + 2-oxoglutarate = 3-phosphooxypyruvate + L-glutamate. The enzyme catalyses 4-(phosphooxy)-L-threonine + 2-oxoglutarate = (R)-3-hydroxy-2-oxo-4-phosphooxybutanoate + L-glutamate. The protein operates within amino-acid biosynthesis; L-serine biosynthesis; L-serine from 3-phospho-D-glycerate: step 2/3. It functions in the pathway cofactor biosynthesis; pyridoxine 5'-phosphate biosynthesis; pyridoxine 5'-phosphate from D-erythrose 4-phosphate: step 3/5. Catalyzes the reversible conversion of 3-phosphohydroxypyruvate to phosphoserine and of 3-hydroxy-2-oxo-4-phosphonooxybutanoate to phosphohydroxythreonine. The sequence is that of Phosphoserine aminotransferase from Azobacteroides pseudotrichonymphae genomovar. CFP2.